A 437-amino-acid chain; its full sequence is MSDFIDRALITVKAGDGGDGMATFRREKYVPRGGPDGGDGGRGGSVYLEVSPHLNTLLPFRFETHFEADKGLNAGRQRKRGRTGEDTFIRVPPGTIVSAEIEGEVQTVDLLFPGQKLLVARGGKGGLGNTHFATASNQVPRIAELGQPGEERELQLELKVIADVGLVGFPNAGKSTLLSMVSAARPKIANYPFTTLSPNLGVAEFNDFTFVVADIPGLIEGASRGVGLGHDFLRHIERTRILVHVLDAAGTEGRDPFEDFLTINAELKAYSSELAQRPQLVALNKTDIPDAEAFDELMRPQIIAWGIDPENIFPISAATNQGLQPLQRRIVDILREMPERITRLPYSEEILTFRFSNIDPNDFWLETEEDGVLRVHGEKIERLVSMTNFAQSESLERLQRVLEAMGVSAALFAAGVRHGDPVRIEKAELLWQDESIG.

Residues 2–161 enclose the Obg domain; the sequence is SDFIDRALIT…RELQLELKVI (160 aa). Positions 162–335 constitute an OBG-type G domain; that stretch reads ADVGLVGFPN…LQRRIVDILR (174 aa). GTP-binding positions include 168–175, 193–197, 214–217, 284–287, and 316–318; these read GFPNAGKS, FTTLS, DIPG, NKTD, and SAA. Mg(2+) contacts are provided by S175 and T195. An OCT domain is found at 355–433; it reads FSNIDPNDFW…IEKAELLWQD (79 aa).

The protein belongs to the TRAFAC class OBG-HflX-like GTPase superfamily. OBG GTPase family. Monomer. Mg(2+) is required as a cofactor.

It is found in the cytoplasm. Functionally, an essential GTPase which binds GTP, GDP and possibly (p)ppGpp with moderate affinity, with high nucleotide exchange rates and a fairly low GTP hydrolysis rate. Plays a role in control of the cell cycle, stress response, ribosome biogenesis and in those bacteria that undergo differentiation, in morphogenesis control. The sequence is that of GTPase Obg from Herpetosiphon aurantiacus (strain ATCC 23779 / DSM 785 / 114-95).